The chain runs to 293 residues: RNA-binding Raly-like protein (293 aa).

Residues serine 21–glutamate 92 enclose the RRM domain. Disordered stretches follow at residues proline 159–serine 195 and glutamine 245–lysine 293. Low complexity predominate over residues lysine 176–lysine 192. Positions lysine 192 to aspartate 254 form a coiled coil. Residues glutamate 259–glycine 284 show a composition bias toward acidic residues.

Belongs to the RRM HNRPC family. RALY subfamily.

The polypeptide is RNA-binding Raly-like protein (RALYL) (Bos taurus (Bovine)).